Here is a 209-residue protein sequence, read N- to C-terminus: Uracil phosphoribosyltransferase (209 aa).

Residues R79, R104, and 131 to 139 each bind 5-phospho-alpha-D-ribose 1-diphosphate; that span reads DPMLATGGS. Uracil contacts are provided by residues V194 and 199–201; that span reads GDA. D200 serves as a coordination point for 5-phospho-alpha-D-ribose 1-diphosphate.

This sequence belongs to the UPRTase family. Requires Mg(2+) as cofactor.

The catalysed reaction is UMP + diphosphate = 5-phospho-alpha-D-ribose 1-diphosphate + uracil. It functions in the pathway pyrimidine metabolism; UMP biosynthesis via salvage pathway; UMP from uracil: step 1/1. Allosterically activated by GTP. Catalyzes the conversion of uracil and 5-phospho-alpha-D-ribose 1-diphosphate (PRPP) to UMP and diphosphate. This is Uracil phosphoribosyltransferase from Bacillus mycoides (strain KBAB4) (Bacillus weihenstephanensis).